The chain runs to 285 residues: Protease HtpX homolog (285 aa).

2 helical membrane passes run 7 to 27 (TAML…MIGG) and 30 to 50 (GMTI…WFSD). Residue His-131 participates in Zn(2+) binding. Glu-132 is a catalytic residue. Position 135 (His-135) interacts with Zn(2+). A run of 2 helical transmembrane segments spans residues 146-166 (ITAT…FFGG) and 177-197 (IAGI…QMAI). Glu-202 provides a ligand contact to Zn(2+).

This sequence belongs to the peptidase M48B family. Requires Zn(2+) as cofactor.

The protein resides in the cell inner membrane. The chain is Protease HtpX homolog from Burkholderia cenocepacia (strain ATCC BAA-245 / DSM 16553 / LMG 16656 / NCTC 13227 / J2315 / CF5610) (Burkholderia cepacia (strain J2315)).